A 295-amino-acid chain; its full sequence is Protease HtpX (295 aa).

2 consecutive transmembrane segments (helical) span residues 4 to 24 and 41 to 61; these read ILLF…TLSL and SSLL…SLFI. Residue H147 participates in Zn(2+) binding. E148 is an active-site residue. H151 serves as a coordination point for Zn(2+). Transmembrane regions (helical) follow at residues 158–178 and 199–219; these read VTLA…ARII and VATI…VMWF. Zn(2+) is bound at residue E224.

The protein belongs to the peptidase M48B family. The cofactor is Zn(2+).

The protein localises to the cell inner membrane. In Pseudomonas putida (strain ATCC 47054 / DSM 6125 / CFBP 8728 / NCIMB 11950 / KT2440), this protein is Protease HtpX.